The sequence spans 259 residues: 5'-nucleotidase SurE (259 aa).

Asp8, Asp9, Ser40, and Asn92 together coordinate a divalent metal cation.

The protein belongs to the SurE nucleotidase family. It depends on a divalent metal cation as a cofactor.

It localises to the cytoplasm. The enzyme catalyses a ribonucleoside 5'-phosphate + H2O = a ribonucleoside + phosphate. Functionally, nucleotidase that shows phosphatase activity on nucleoside 5'-monophosphates. This is 5'-nucleotidase SurE from Xanthomonas euvesicatoria pv. vesicatoria (strain 85-10) (Xanthomonas campestris pv. vesicatoria).